Consider the following 284-residue polypeptide: Homeobox protein six1b (284 aa).

The segment at residues 124 to 183 is a DNA-binding region (homeobox); the sequence is GEETSYCFKEKSRGVLREWYTHNPYPSPREKRELAEATGLTTTQVSNWFKNRRQRDRAAE. The tract at residues 167-238 is disordered; the sequence is QVSNWFKNRR…NSVLLLQGNM (72 aa). The span at 179–190 shows a compositional bias: basic and acidic residues; that stretch reads DRAAEAKERENS. 2 stretches are compositionally biased toward polar residues: residues 191–204 and 226–238; these read ENNN…NQLS and PDQN…QGNM.

The protein belongs to the SIX/Sine oculis homeobox family. In terms of assembly, interacts with eya1.

It is found in the nucleus. It localises to the cytoplasm. Functionally, transcription factor that is involved in the regulation of cell proliferation, apoptosis and embryonic development. Depending on context, functions as a transcriptional repressor or activator. Transcriptional activation is enhanced by eya1 (in vitro). Plays an important role in the development of the inner ear, where it promotes hair cell proliferation and inhibits proliferation of neural progenitor cells. Required for normal myogenesis. Plays a role in the development of fast muscle fibers throughout the body, as well as the development of craniofacial muscles. Required for normal expression of myod1 and myog during myogenesis. This Danio rerio (Zebrafish) protein is Homeobox protein six1b (six1b).